The following is a 221-amino-acid chain: Uracil-DNA glycosylase 1 (221 aa).

D61 (proton acceptor) is an active-site residue.

This sequence belongs to the uracil-DNA glycosylase (UDG) superfamily. UNG family.

Its subcellular location is the cytoplasm. It carries out the reaction Hydrolyzes single-stranded DNA or mismatched double-stranded DNA and polynucleotides, releasing free uracil.. Excises uracil residues from the DNA which can arise as a result of misincorporation of dUMP residues by DNA polymerase or due to deamination of cytosine. The sequence is that of Uracil-DNA glycosylase 1 from Listeria monocytogenes serovar 1/2a (strain ATCC BAA-679 / EGD-e).